The following is a 589-amino-acid chain: Aspartate--tRNA ligase (589 aa).

Glutamate 174 serves as a coordination point for L-aspartate. An aspartate region spans residues 198–201 (QLFK). Arginine 220 lines the L-aspartate pocket. Residues 220 to 222 (RDE) and glutamine 229 each bind ATP. Histidine 448 is a binding site for L-aspartate. Position 484 (glutamate 484) interacts with ATP. Arginine 491 provides a ligand contact to L-aspartate. Position 536–539 (536–539 (GLDR)) interacts with ATP.

The protein belongs to the class-II aminoacyl-tRNA synthetase family. Type 1 subfamily. Homodimer.

The protein resides in the cytoplasm. The enzyme catalyses tRNA(Asp) + L-aspartate + ATP = L-aspartyl-tRNA(Asp) + AMP + diphosphate. Functionally, catalyzes the attachment of L-aspartate to tRNA(Asp) in a two-step reaction: L-aspartate is first activated by ATP to form Asp-AMP and then transferred to the acceptor end of tRNA(Asp). In Leuconostoc citreum (strain KM20), this protein is Aspartate--tRNA ligase.